Consider the following 131-residue polypeptide: D-ribose pyranase (131 aa).

His-20 (proton donor) is an active-site residue. Residues Asp-28, His-98, and 120-122 (YAN) contribute to the substrate site.

It belongs to the RbsD / FucU family. RbsD subfamily. In terms of assembly, homodecamer.

It is found in the cytoplasm. It catalyses the reaction beta-D-ribopyranose = beta-D-ribofuranose. It participates in carbohydrate metabolism; D-ribose degradation; D-ribose 5-phosphate from beta-D-ribopyranose: step 1/2. In terms of biological role, catalyzes the interconversion of beta-pyran and beta-furan forms of D-ribose. This Bacillus cytotoxicus (strain DSM 22905 / CIP 110041 / 391-98 / NVH 391-98) protein is D-ribose pyranase.